We begin with the raw amino-acid sequence, 324 residues long: MATATSGTGKTKVAVIGSGNIGTDLMIKILRTSEVLEIAAMVGIDAESDGLARARRLKVATTHEGIDGLLRMPEFDDIEIVFDATSAGAHARNDELLRARGRRVIDLTPAAIGPYVVPPVNLDAHLDAPNINMVTCGGQATIPIVAAVNAVTPVAYAEIVASIASKSAGPGTRANIDEFTETTASAIEKVGGAARGKAIIVLNPAEPPLVMRDTVYCLIGASDQATQDAVVASVTRMVDRVREYVPGYRLKQQVQIEEASADDPLRQLAPDGSEPAKVTVFLEVTGAAHYLPAYAGNLDIMTSAALRAGERLAQTLTQREGATA.

18-21 (SGNI) provides a ligand contact to NAD(+). The active-site Acyl-thioester intermediate is Cys136. NAD(+)-binding positions include 167 to 175 (SAGPGTRAN) and Asn297.

It belongs to the acetaldehyde dehydrogenase family.

It catalyses the reaction acetaldehyde + NAD(+) + CoA = acetyl-CoA + NADH + H(+). The chain is Acetaldehyde dehydrogenase 1 from Parafrankia sp. (strain EAN1pec).